A 99-amino-acid polypeptide reads, in one-letter code: uncharacterized protein (99 aa).

The disordered stretch occupies residues Met-1–Phe-99. The span at Gln-19 to Glu-29 shows a compositional bias: polar residues.

This is an uncharacterized protein from Schizosaccharomyces pombe (strain 972 / ATCC 24843) (Fission yeast).